Consider the following 297-residue polypeptide: MRIILITGISGSGKSVALNALEDAGYYCVDNLPPRFLPQLASYLAEDGQDRLAVAIDARSSASLDEMPAMIRDLSRAHDVRVLFLNASTQSLIQRFSETRRRHPLSGSTSHDADVGLLNSLAEAIERERELVAGLAEFGHQIDTSNLRANVLRAWVKRFIEQKDSGLVLMFESFGFKRGVPLDADFVFDVRTLPNPYYDHELRPLTGLDKPVIDFLDALPVVHEMIDDIEKFLAKWLPHFRDDNRSYLTVAIGCTGGQHRSVFIAETLAARLAASANVIVRHRDAPVEAGESSKLVA.

Position 8–15 (8–15) interacts with ATP; the sequence is GISGSGKS. Position 57–60 (57–60) interacts with GTP; that stretch reads DARS.

This sequence belongs to the RapZ-like family.

In terms of biological role, displays ATPase and GTPase activities. In Paraburkholderia xenovorans (strain LB400), this protein is Nucleotide-binding protein Bxeno_A0336.